Here is a 476-residue protein sequence, read N- to C-terminus: Aspartyl/glutamyl-tRNA(Asn/Gln) amidotransferase subunit B (476 aa).

The protein belongs to the GatB/GatE family. GatB subfamily. As to quaternary structure, heterotrimer of A, B and C subunits.

The enzyme catalyses L-glutamyl-tRNA(Gln) + L-glutamine + ATP + H2O = L-glutaminyl-tRNA(Gln) + L-glutamate + ADP + phosphate + H(+). It catalyses the reaction L-aspartyl-tRNA(Asn) + L-glutamine + ATP + H2O = L-asparaginyl-tRNA(Asn) + L-glutamate + ADP + phosphate + 2 H(+). Allows the formation of correctly charged Asn-tRNA(Asn) or Gln-tRNA(Gln) through the transamidation of misacylated Asp-tRNA(Asn) or Glu-tRNA(Gln) in organisms which lack either or both of asparaginyl-tRNA or glutaminyl-tRNA synthetases. The reaction takes place in the presence of glutamine and ATP through an activated phospho-Asp-tRNA(Asn) or phospho-Glu-tRNA(Gln). This chain is Aspartyl/glutamyl-tRNA(Asn/Gln) amidotransferase subunit B, found in Oceanobacillus iheyensis (strain DSM 14371 / CIP 107618 / JCM 11309 / KCTC 3954 / HTE831).